A 214-amino-acid polypeptide reads, in one-letter code: UPF0502 protein Acid345_3645 (214 aa).

Belongs to the UPF0502 family.

The sequence is that of UPF0502 protein Acid345_3645 from Koribacter versatilis (strain Ellin345).